A 295-amino-acid polypeptide reads, in one-letter code: Lectin 11 (295 aa).

The Cytoplasmic portion of the chain corresponds to 1–22; it reads MHYSHFYFIINNTNMTINAIPK. A helical membrane pass occupies residues 23–45; that stretch reads LFATKNSISLSIVIFMYLLILVA. Residues 46–295 lie on the Extracellular side of the membrane; it reads NVKSDSSFNF…ILSWSFTSNM (250 aa). The N-linked (GlcNAc...) asparagine glycan is linked to asparagine 152.

Belongs to the leguminous lectin family.

The protein resides in the membrane. Its function is as follows. May be involved in arbuscular mycorrhizal (AM) symbiosis with AM fungi. The chain is Lectin 11 from Medicago truncatula (Barrel medic).